The primary structure comprises 501 residues: Phenylalanine--tRNA ligase alpha subunit (501 aa).

2 residues coordinate L-phenylalanine: Thr-340 and Phe-423. Mg(2+) is bound at residue Glu-425. Phe-448 is a binding site for L-phenylalanine.

It belongs to the class-II aminoacyl-tRNA synthetase family. Phe-tRNA synthetase alpha subunit type 2 subfamily. In terms of assembly, tetramer of two alpha and two beta subunits. The cofactor is Mg(2+).

It localises to the cytoplasm. The catalysed reaction is tRNA(Phe) + L-phenylalanine + ATP = L-phenylalanyl-tRNA(Phe) + AMP + diphosphate + H(+). This Methanococcus vannielii (strain ATCC 35089 / DSM 1224 / JCM 13029 / OCM 148 / SB) protein is Phenylalanine--tRNA ligase alpha subunit.